Here is a 741-residue protein sequence, read N- to C-terminus: Wall-associated receptor kinase 3 (741 aa).

A signal peptide spans 1–23; that stretch reads MKFQEGVFLVVIFFLAYTQLVKG. At 24-342 the chain is on the extracellular side; that stretch reads QHQPREDCKL…CTRPEYKRTR (319 aa). Asn37, Asn59, Asn78, Asn100, Asn103, Asn141, Asn192, Asn199, Asn232, Asn246, Asn261, and Asn266 each carry an N-linked (GlcNAc...) asparagine glycan. The 48-residue stretch at 245–292 folds into the EGF-like 1 domain; that stretch reads GNQTCEQAGSTRICGKNSSCYNSTTRNGYICKCNEGYDGNPYRSEGCK. 6 disulfide bridges follow: Cys249–Cys264, Cys258–Cys275, Cys277–Cys291, Cys297–Cys310, Cys304–Cys319, and Cys321–Cys333. An EGF-like 2; calcium-binding domain is found at 293 to 334; it reads DIDECISDTHNCSDPKTCRNRDGGFDCKCPSGYDLNSSMSCT. Residue Asn303 is glycosylated (N-linked (GlcNAc...) asparagine). Asn328 carries N-linked (GlcNAc...) asparagine glycosylation. The chain crosses the membrane as a helical span at residues 343–363; that stretch reads IFLVIIIGVLVLLLAAICIQH. At 364–741 the chain is on the cytoplasmic side; the sequence is ATKQRKYTKL…VAILDIETGR (378 aa). Residue Thr404 is modified to Phosphothreonine. One can recognise a Protein kinase domain in the interval 415–698; sequence YDESRILGQG…RVEKTKHKWS (284 aa). ATP-binding positions include 421–429 and Lys443; that span reads LGQGGQGTV. Tyr488 carries the phosphotyrosine modification. Asp540 acts as the Proton acceptor in catalysis. A phosphothreonine mark is found at Thr574 and Thr579. At Tyr587 the chain carries Phosphotyrosine.

The protein belongs to the protein kinase superfamily. Ser/Thr protein kinase family. As to expression, predominantly expressed in green tissues such as stems and leaves.

The protein localises to the membrane. It carries out the reaction L-seryl-[protein] + ATP = O-phospho-L-seryl-[protein] + ADP + H(+). The enzyme catalyses L-threonyl-[protein] + ATP = O-phospho-L-threonyl-[protein] + ADP + H(+). Functionally, serine/threonine-protein kinase that may function as a signaling receptor of extracellular matrix component. Binding to pectin may have significance in the control of cell expansion, morphogenesis and development. The chain is Wall-associated receptor kinase 3 (WAK3) from Arabidopsis thaliana (Mouse-ear cress).